Reading from the N-terminus, the 1604-residue chain is MDPSRETFDGSTRDSYKPPNGAEMMGQSELNTQNRIPYNTSANNRNWQIPLYWQQRGNEFQASPPPPLGYVTPEYGATGTPVNANNASRVDYATTAANVPEEYANDYSSELAYIHNVNDMPHVDGLSNHSPATQPDLFETPAQSDPILFSSYPHAAQARVDPSISKDLYNMVPRPDANTVSPHAARSASSLPVPKEASETPFRDASTDLFDEHAHAAPMHSSISISTLLSDSDRYEPHVSLTENISPVMAPSIDARLSQTILRGLPPAQKLSPNSSQSQITHNRRKHKLPLNATTNNSVVLTPDTSPLLDSDEVVSDDDSNEQQTMMMKFNYLQHLRNKRDEAVHAEKRRLLDIRGSIHDRLVCRYENRYNKLHASEYNHHHDWAVRQAIREEVAAVEAAKIRADEEKKKKEREEQVRLLQESADKDAEMNEASTATSENEDLKDDLSLADLSSKKTANSQATENNNTPSKAKVKAESKVRSKAKSDKSRAKLSSDTNKDSEKNDNNDASLQSAGVASDGESSPETPLTKASKSKKAKASKLANDTSKNANGETKSTPKKSKKKTSKAQQEANSTTAEGKEKLSGDSTETGNSTNKEASTEDTKANATASAPNKKKKTVETLQQQVIKEIARKEIPRVYKIIQQNQYNRSTNARKTSQLCGREARRWQFRTIKNNKDMQTKAKRAMRETMVFWKRNERVERDLRKKAEREALDRAKKEEELRESRRQARKLDFLITQTELYSHFVGRKMDREQDLPSATNTASVSEINFDSDEEEDIRRLAVESAQEAVQKAREHSQLFDANRQQSPNNSSSDMNEGEMNFQNPTLVNAFEVKQPKMLMCKLKEYQLKGLNWLANLYEQGINGILADEMGLGKTVQSISVMAYLAETHNIWGPFLVIAPASTLHNWQQEITRFVPKLKCIPYWGSTKDRKILRKFWCRKNMTYDENSPFHVVVTSYQLVVLDAQYFQSVKWQYMILDEAQAIKSSSSSRWKSLLAFKCRNRLLLTGTPIQNTMQELWALLHFIMPSLFDSHNEFSEWFSKDIESHAQSNTQLNEQQLKRLHMILKPFMLRRVKKNVQSELGEKIEKEVYCDLTQRQKILYQALRRQISIAELLEKAILGGDDTVASIMNLVMQFRKVCNHPDLFEREDVRSPLSLATWSKSIYINREGNFLDVPYNTRNFITFSIPRLLYEQGGILSVPGLNTSRGFETKYLYNLMNIWNPEYTNDSIKSNPEGSPFSWLRFVDESPQTLFQTFQNPVVHYLDEAEASSSLKEEQLCRQEFCYGKDYSNVRKMLLLPKSITKVDVLGSDFKEDSPFYHLTHVLEESDSQLDLTLLDSVLVQRASAPPIDIYCPGSRQFTVLQSRFQRDHLWSHYLYQPLKGEEDLIINNQAVSKLPIPRKPLLPSFGIAKGSYSNVRIPSMLRFIADSGKLSKLDKLLVELKANDHRVLIYFQMTRMIDLMEEYLTFRQYKYLRLDGSSKISQRRDMVTEWQTRPELFVFLLSTRAGGLGINLTAADTVIFYDSDWNPSIDSQAMDRAHRIGQQKQVTVYRFITRGTIEERIVIRAKEKEEVQKVVISGGETRPTKQMDLKGNSREMVSWLLEE.

The span at 1–16 (MDPSRETFDGSTRDSY) shows a compositional bias: basic and acidic residues. Disordered stretches follow at residues 1 to 38 (MDPSRETFDGSTRDSYKPPNGAEMMGQSELNTQNRIPY), 174 to 201 (RPDANTVSPHAARSASSLPVPKEASETP), 266 to 285 (PPAQKLSPNSSQSQITHNRR), 297 to 316 (NSVVLTPDTSPLLDSDEVVS), and 406 to 620 (EEKK…KTVE). The segment covering 28-38 (SELNTQNRIPY) has biased composition (polar residues). The residue at position 179 (Thr179) is a Phosphothreonine. Polar residues predominate over residues 271-281 (LSPNSSQSQIT). Residues 406–429 (EEKKKKEREEQVRLLQESADKDAE) show a composition bias toward basic and acidic residues. Over residues 457–470 (TANSQATENNNTPS) the composition is skewed to polar residues. 2 stretches are compositionally biased toward basic and acidic residues: residues 474-490 (VKAESKVRSKAKSDKSR) and 497-506 (TNKDSEKNDN). Composition is skewed to polar residues over residues 507–526 (NDASLQSAGVASDGESSPET) and 543–553 (ANDTSKNANGE). A Phosphoserine modification is found at Ser518. Residues 557-566 (TPKKSKKKTS) show a composition bias toward basic residues. Composition is skewed to polar residues over residues 568 to 577 (AQQEANSTTA) and 585 to 597 (GDSTETGNSTNKE). Residues 626–751 (VIKEIARKEI…SHFVGRKMDR (126 aa)) enclose the DBINO domain. Residues 792-820 (AREHSQLFDANRQQSPNNSSSDMNEGEMN) form a disordered region. Over residues 802–820 (NRQQSPNNSSSDMNEGEMN) the composition is skewed to polar residues. The 173-residue stretch at 854–1026 (ANLYEQGING…WALLHFIMPS (173 aa)) folds into the Helicase ATP-binding domain. Residue 867-874 (DEMGLGKT) coordinates ATP. Residues 977 to 980 (DEAQ) carry the DEAQ box motif. Residues 1433-1591 (KLDKLLVELK…TRPTKQMDLK (159 aa)) form the Helicase C-terminal domain.

It belongs to the SNF2/RAD54 helicase family. Component of the INO80 chromatin-remodeling complex.

It localises to the nucleus. It catalyses the reaction ATP + H2O = ADP + phosphate + H(+). In terms of biological role, ATPase component of the INO80 complex which remodels chromatin by shifting nucleosomes and is involved in DNA repair. This chain is Chromatin-remodeling ATPase INO80 (ino80), found in Schizosaccharomyces pombe (strain 972 / ATCC 24843) (Fission yeast).